The following is a 529-amino-acid chain: Listeriolysin O (529 aa).

An N-terminal signal peptide occupies residues 1-24 (MKKIMLVFITLILVSLPIAQQTEA). 4 consecutive transmembrane segments (beta stranded) span residues 214-227 (ESQL…AFKA), 234-243 (VNFGAISEGK), 312-321 (STKVKAAFDA), and 329-341 (SGDV…IKNS). The Conserved undecapeptide motif lies at 483–493 (ECTGLAWEWWR). The short motif at 515–516 (TL) is the Cholesterol binding element.

It belongs to the cholesterol-dependent cytolysin family. In terms of assembly, homooligomeric pore complex of 35 to 50 subunits; when inserted in the host membrane.

It localises to the secreted. The protein localises to the host membrane. It is found in the host cell membrane. With respect to regulation, activity of listeriolysin O is regulated on multiple levels. It should be high in the phagosome, thereby allowing escape of the bacteria from the phagosomal compartment. Then, once inside the host cytosol, the activity must be controlled to prevent lysis of the host plasma membrane and loss of the intracellular environment. Functionally, a cholesterol-dependent toxin that causes cytolysis by forming pores in cholesterol containing host membranes. After binding to target membranes, the protein undergoes a major conformation change, leading to its insertion in the host membrane and formation of an oligomeric pore complex. Cholesterol is required for binding to host membranes, membrane insertion and pore formation; cholesterol binding is mediated by a Thr-Leu pair in the C-terminus. Acts as a major virulence factor required for the escape of bacteria from phagosomal vacuoles and entry into the host cytosol. Can be reversibly inactivated by oxidation. The chain is Listeriolysin O (hly) from Listeria monocytogenes serotype 4b (strain CLIP80459).